Consider the following 137-residue polypeptide: Nucleoside diphosphate kinase (137 aa).

ATP-binding residues include Lys10, Phe58, Arg86, Thr92, Arg103, and Asn113. His116 functions as the Pros-phosphohistidine intermediate in the catalytic mechanism.

This sequence belongs to the NDK family. As to quaternary structure, homotetramer. The cofactor is Mg(2+).

The protein resides in the cytoplasm. It catalyses the reaction a 2'-deoxyribonucleoside 5'-diphosphate + ATP = a 2'-deoxyribonucleoside 5'-triphosphate + ADP. The enzyme catalyses a ribonucleoside 5'-diphosphate + ATP = a ribonucleoside 5'-triphosphate + ADP. Its function is as follows. Major role in the synthesis of nucleoside triphosphates other than ATP. The ATP gamma phosphate is transferred to the NDP beta phosphate via a ping-pong mechanism, using a phosphorylated active-site intermediate. This chain is Nucleoside diphosphate kinase, found in Helicobacter pylori (strain G27).